A 156-amino-acid polypeptide reads, in one-letter code: MASGLGDLSVGVSSLPMRELAWRRVADDSHDLWCCCMDWKAHVEYAHPASELRPGSGGWPEHAEAQWRQQVHAAHDVWCNCGDWQGHALRSRSRTAESGRSSSSSSVSVLSDGDQQPWWRRLRVKRPKFPSWARRWTQRHDSEERASQQAKNDSTS.

2 disordered regions span residues 90 to 114 (RSRS…SDGD) and 133 to 156 (ARRW…DSTS). A compositionally biased stretch (low complexity) spans 96–111 (AESGRSSSSSSVSVLS). Polar residues predominate over residues 147-156 (SQQAKNDSTS).

The polypeptide is Protein US1 (US1) (Homo sapiens (Human)).